A 403-amino-acid chain; its full sequence is Phosphoglycerate kinase (403 aa).

Substrate-binding positions include Asp21–Asn23, Arg36, His59–Arg62, Arg119, and Arg154. ATP-binding positions include Lys207, Gly299, Glu330, and Gly357–Ala360.

The protein belongs to the phosphoglycerate kinase family. Monomer.

It is found in the cytoplasm. It carries out the reaction (2R)-3-phosphoglycerate + ATP = (2R)-3-phospho-glyceroyl phosphate + ADP. The protein operates within carbohydrate degradation; glycolysis; pyruvate from D-glyceraldehyde 3-phosphate: step 2/5. The protein is Phosphoglycerate kinase of Chlamydia caviae (strain ATCC VR-813 / DSM 19441 / 03DC25 / GPIC) (Chlamydophila caviae).